Reading from the N-terminus, the 259-residue chain is Ubiquinone biosynthesis protein COQ4 homolog, mitochondrial (259 aa).

H162, D163, H166, and E178 together coordinate Zn(2+).

Belongs to the COQ4 family. Component of a multi-subunit COQ enzyme complex. Requires Zn(2+) as cofactor.

Its subcellular location is the mitochondrion inner membrane. The enzyme catalyses a 4-hydroxy-3-methoxy-5-(all-trans-polyprenyl)benzoate + H(+) = a 2-methoxy-6-(all-trans-polyprenyl)phenol + CO2. The protein operates within cofactor biosynthesis; ubiquinone biosynthesis. Lyase that catalyzes the C1-decarboxylation of 4-hydroxy-3-methoxy-5-(all-trans-polyprenyl)benzoic acid into 2-methoxy-6-(all-trans-polyprenyl)phenol during ubiquinone biosynthesis. In Bombyx mori (Silk moth), this protein is Ubiquinone biosynthesis protein COQ4 homolog, mitochondrial.